The chain runs to 208 residues: Calaxin (208 aa).

EF-hand domains lie at 64 to 99 (TDDM…FLHG), 100 to 135 (TLEE…SLLK), and 145 to 180 (GVKD…ENLL). Positions 77, 79, 81, 113, 115, 117, 119, 124, 158, 160, 162, 164, and 169 each coordinate Ca(2+).

As to quaternary structure, component of the outer dynein arm-docking complex along with ODAD1, ODAD2, ODAD3 and ODAD4.

It is found in the cytoplasm. The protein localises to the cytoskeleton. It localises to the cilium axoneme. The protein resides in the cell projection. Its subcellular location is the cilium. It is found in the flagellum. Functionally, component of the outer dynein arm-docking complex (ODA-DC) that mediates outer dynein arms (ODA) binding onto the doublet microtubule. Seems to regulate the assembly of both ODAs and their axonemal docking complex onto ciliary microtubules. Regulates ciliary and flagellar motility and is required for cilia-driven determination of body laterality. This chain is Calaxin (clxn), found in Xenopus laevis (African clawed frog).